Reading from the N-terminus, the 98-residue chain is NADH-ubiquinone oxidoreductase chain 4L (98 aa).

The next 3 membrane-spanning stretches (helical) occupy residues 1–21 (MPFIYINILLAFFISFIGLLM), 29–49 (SLLCLEGMMLSLYILGTLLCL), and 61–81 (MILLVFAACEAAVGLALLVMV).

Belongs to the complex I subunit 4L family. As to quaternary structure, core subunit of respiratory chain NADH dehydrogenase (Complex I) which is composed of 45 different subunits.

Its subcellular location is the mitochondrion inner membrane. The enzyme catalyses a ubiquinone + NADH + 5 H(+)(in) = a ubiquinol + NAD(+) + 4 H(+)(out). Core subunit of the mitochondrial membrane respiratory chain NADH dehydrogenase (Complex I) which catalyzes electron transfer from NADH through the respiratory chain, using ubiquinone as an electron acceptor. Part of the enzyme membrane arm which is embedded in the lipid bilayer and involved in proton translocation. This is NADH-ubiquinone oxidoreductase chain 4L (MT-ND4L) from Dugong dugon (Dugong).